Consider the following 401-residue polypeptide: All trans-polyprenyl-diphosphate synthase PDSS2 (401 aa).

This sequence belongs to the FPP/GGPP synthase family. As to quaternary structure, heterotetramer composed of 2 PDSS1/DPS1 and 2 PDSS2/DLP1 subunits.

It localises to the mitochondrion. The enzyme catalyses 7 isopentenyl diphosphate + (2E,6E)-farnesyl diphosphate = all-trans-decaprenyl diphosphate + 7 diphosphate. It carries out the reaction 6 isopentenyl diphosphate + (2E,6E)-farnesyl diphosphate = all-trans-nonaprenyl diphosphate + 6 diphosphate. It participates in cofactor biosynthesis; ubiquinone biosynthesis. Its function is as follows. Heterotetrameric enzyme that catalyzes the condensation of farnesyl diphosphate (FPP), which acts as a primer, and isopentenyl diphosphate (IPP) to produce prenyl diphosphates of varying chain lengths and participates in the determination of the side chain of ubiquinone. Supplies nona and decaprenyl diphosphate, the precursors for the side chain of the isoprenoid quinones ubiquinone-9 (Q9) and ubiquinone-10 (Q10) respectively. The enzyme adds isopentenyl diphosphate molecules sequentially to farnesyl diphosphate with trans stereochemistry. May play a role during cerebellar development. May regulate mitochondrial respiratory chain function. The sequence is that of All trans-polyprenyl-diphosphate synthase PDSS2 from Rattus norvegicus (Rat).